The sequence spans 340 residues: MSEHAPLRALNTFHVEATARWLLSVHTPEALPQALAAPEIADQPLLVLGSGSNVLLAGDPPGCVLCFENRDTAIIAHHADHAIVRAGAGVNWHALVLYSLQQGLSGLENLALIPGTVGACPIQNIGAYGAQVGDFIHVVEAFDRHHQQFVRLDAAACALGYRDSVFKQQPERYLIVAVEFNLPLLCELRLDYAGIREELASMGAELARAADVAQAVINIRQRKLPDPDVLGNAGSFFKNPLLPNEQIAALQASFTDMPVYPGEHAGLGKLSAAWLIEQCGWKGRREGDAGVSPEHALVLVNYGTASGAQLLDFARRIAESVRERYSVILEPEPRIIGAHW.

The FAD-binding PCMH-type domain occupies 14 to 185; the sequence is HVEATARWLL…VAVEFNLPLL (172 aa). Arginine 162 is an active-site residue. Serine 235 acts as the Proton donor in catalysis. Glutamate 332 is an active-site residue.

This sequence belongs to the MurB family. The cofactor is FAD.

The protein resides in the cytoplasm. The catalysed reaction is UDP-N-acetyl-alpha-D-muramate + NADP(+) = UDP-N-acetyl-3-O-(1-carboxyvinyl)-alpha-D-glucosamine + NADPH + H(+). Its pathway is cell wall biogenesis; peptidoglycan biosynthesis. Cell wall formation. The sequence is that of UDP-N-acetylenolpyruvoylglucosamine reductase from Xanthomonas oryzae pv. oryzae (strain KACC10331 / KXO85).